A 192-amino-acid chain; its full sequence is MRDMIIVVPIGEVPSDVLSFLSENIESFYMKFGIGVKIIGSLPISAFSHAYDFYRNQYLARHFLPALSIIRRDYKALAVMGVTEVDLYESGLNFIFGIAHPGFGVALISLHRLYPEFYGEPPDRKLLKERALKEAMHELGHVFGLEHCPNPKCVMHFSNSIIDTDIKSWMYCKNCLRKLEERLGRGYVRGRT.

Residue H137 participates in Zn(2+) binding. The active-site Proton acceptor is E138. 6 residues coordinate Zn(2+): H141, H147, C148, C153, C172, and C175.

It belongs to the peptidase M54 family. In terms of assembly, monomer. It depends on Zn(2+) as a cofactor.

In terms of biological role, probable zinc metalloprotease whose natural substrate is unknown. The polypeptide is Archaemetzincin (Pyrococcus furiosus (strain ATCC 43587 / DSM 3638 / JCM 8422 / Vc1)).